The sequence spans 323 residues: Lipoyl synthase (323 aa).

[4Fe-4S] cluster is bound by residues Cys-61, Cys-66, Cys-72, Cys-87, Cys-91, Cys-94, and Ser-300. Residues 73-289 form the Radical SAM core domain; the sequence is WDKKHATFMI…ETVAYSKGFL (217 aa).

It belongs to the radical SAM superfamily. Lipoyl synthase family. It depends on [4Fe-4S] cluster as a cofactor.

It is found in the cytoplasm. It catalyses the reaction [[Fe-S] cluster scaffold protein carrying a second [4Fe-4S](2+) cluster] + N(6)-octanoyl-L-lysyl-[protein] + 2 oxidized [2Fe-2S]-[ferredoxin] + 2 S-adenosyl-L-methionine + 4 H(+) = [[Fe-S] cluster scaffold protein] + N(6)-[(R)-dihydrolipoyl]-L-lysyl-[protein] + 4 Fe(3+) + 2 hydrogen sulfide + 2 5'-deoxyadenosine + 2 L-methionine + 2 reduced [2Fe-2S]-[ferredoxin]. It functions in the pathway protein modification; protein lipoylation via endogenous pathway; protein N(6)-(lipoyl)lysine from octanoyl-[acyl-carrier-protein]: step 2/2. Catalyzes the radical-mediated insertion of two sulfur atoms into the C-6 and C-8 positions of the octanoyl moiety bound to the lipoyl domains of lipoate-dependent enzymes, thereby converting the octanoylated domains into lipoylated derivatives. This Rhizobium etli (strain ATCC 51251 / DSM 11541 / JCM 21823 / NBRC 15573 / CFN 42) protein is Lipoyl synthase.